Here is a 387-residue protein sequence, read N- to C-terminus: Aminodeoxyfutalosine synthase (387 aa).

The region spanning 52–279 (VHFNVNRHLN…ARTQMATGAE (228 aa)) is the Radical SAM core domain. Positions 66, 70, and 73 each coordinate [4Fe-4S] cluster.

This sequence belongs to the radical SAM superfamily. MqnE family. It depends on [4Fe-4S] cluster as a cofactor.

It catalyses the reaction 3-[(1-carboxyvinyl)-oxy]benzoate + S-adenosyl-L-methionine + H2O = 6-amino-6-deoxyfutalosine + hydrogencarbonate + L-methionine + H(+). It functions in the pathway quinol/quinone metabolism; menaquinone biosynthesis. In terms of biological role, radical SAM enzyme that catalyzes the addition of the adenosyl radical to the double bond of 3-[(1-carboxyvinyl)oxy]benzoate, leading to aminodeoxyfutalosine (AFL), a key intermediate in the formation of menaquinone (MK, vitamin K2) from chorismate. This is Aminodeoxyfutalosine synthase from Streptomyces coelicolor (strain ATCC BAA-471 / A3(2) / M145).